We begin with the raw amino-acid sequence, 457 residues long: Cysteine desulfurase (457 aa).

Positions 127, 128, 235, 255, and 257 each coordinate pyridoxal 5'-phosphate. K258 bears the N6-(pyridoxal phosphate)lysine mark. Pyridoxal 5'-phosphate is bound at residue T295. C381 acts as the Cysteine persulfide intermediate in catalysis. C381 is a binding site for [2Fe-2S] cluster. C381 serves as a coordination point for Zn(2+). C381 carries the cysteine persulfide modification.

It belongs to the class-V pyridoxal-phosphate-dependent aminotransferase family. NifS/IscS subfamily. As to quaternary structure, homodimer. Component of the mitochondrial core iron-sulfur cluster (ISC) complex composed of NFS1, LYRM4, NDUFAB1, ISCU, FXN, and FDX2; this complex is a heterohexamer containing two copies of each monomer. Component of cyteine desulfurase complex composed of NFS1, LYRM4 and NDUFAB1; this complex contributes to the activation of cysteine desulfurase activity and NFS1 stabilization. Interacts (homodimer form) with ISCU (D-state); each monomer interacts with the C-terminal regions of each NFS1 monomer. Interacts with HSPA9. Interacts (via homodimer form) with FDX2. Interacts (via homodimer form) with FXN. Interacts with LYRM4. Component of a complex composed of FXN, NFS1, LYRM4 and ISCU. In terms of assembly, monomer. Homodimer. Oligomer. Interacts with ISCU. Component of the cysteine desulfurase complex composed of NFS1 and LYRM4; this complex contributes to the activation of cysteine desulfurase activity. Interacts with MOCS3. Requires pyridoxal 5'-phosphate as cofactor. In terms of processing, N-gluconoylated. Post-translationally, cysteine persulfide intermediate is reduced by thiol-containing molecules like glutathione and L-cysteine. Persulfide reduction is a rate-limiting step of cysteine desulfurase catalytic cycle.

It localises to the mitochondrion. The protein localises to the cytoplasm. The protein resides in the nucleus. It is found in the cytoskeleton. Its subcellular location is the microtubule organizing center. It localises to the centrosome. The catalysed reaction is (sulfur carrier)-H + L-cysteine = (sulfur carrier)-SH + L-alanine. It catalyses the reaction L-cysteinyl-[cysteine desulfurase] + L-cysteine = S-sulfanyl-L-cysteinyl-[cysteine desulfurase] + L-alanine. Its activity is regulated as follows. Active only in complex with LYRM4. Its function is as follows. Cysteine desulfurase, of the core iron-sulfur cluster (ISC) assembly complex, that catalyzes the desulfuration of L-cysteine to L-alanine, as component of the cysteine desulfurase complex leading to the formation of a cysteine persulfide intermediate at the active site cysteine residue and participates in the [2Fe-2S] clusters assembly on the scaffolding protein ISCU. The persulfide is then transferred on the flexible Cys loop from the catalytic site of NFS1 to the surface of NFS1. After the NFS1-linked persulfide sulfur is transferred to one of the conserved Cys residues of the scaffold, a reaction assisted by FXN. The core iron-sulfur cluster (ISC) assembly complex is involved in the de novo synthesis of a [2Fe-2S] cluster, the first step of the mitochondrial iron-sulfur protein biogenesis. This process is initiated by the cysteine desulfurase complex (NFS1:LYRM4:NDUFAB1) that produces persulfide which is delivered on the scaffold protein ISCU in a FXN-dependent manner. Then this complex is stabilized by FDX2 which provides reducing equivalents to accomplish the [2Fe-2S] cluster assembly. Finally, the [2Fe-2S] cluster is transferred from ISCU to chaperone proteins, including HSCB, HSPA9 and GLRX5. Functionally, may catalyze the desulfuration of L-cysteine to L-alanine as component of the cysteine desulfurase complex (NFS1:LYRM4), leading to the formation of a cysteine persulfide intermediate. Acts as a sulfur donor for MOCS3 by transferring the sulfur of the cysteine persulfide intermediate on MOCS3. This chain is Cysteine desulfurase, found in Pongo abelii (Sumatran orangutan).